The primary structure comprises 980 residues: Putative helicase 087L (980 aa).

The region spanning 59 to 246 is the Helicase ATP-binding domain; that stretch reads INPHTLYDGV…IDLFNLILRT (188 aa). Position 72 to 79 (72 to 79) interacts with ATP; sequence HEMGTGKT. Residues 189–192 carry the DEAH box motif; that stretch reads DEAH. The Helicase C-terminal domain occupies 389–546; it reads RLSFVFSEFV…SIDLHMYEIA (158 aa).

Belongs to the IIV-6 022L family. SNF2/RAD54 helicase subfamily.

The protein is Putative helicase 087L of Invertebrate iridescent virus 3 (IIV-3).